Reading from the N-terminus, the 224-residue chain is ATP synthase subunit a (224 aa).

6 helical membrane passes run 17 to 37 (LSLN…IYWL), 72 to 92 (IFIS…FPYI), 99 to 119 (LTLT…YGWI), 125 to 145 (MFAH…MVCI), 155 to 175 (GTLA…LTLL), and 184 to 204 (YLLV…ESAV).

The protein belongs to the ATPase A chain family. F-type ATPases have 2 components, CF(1) - the catalytic core - and CF(0) - the membrane proton channel. CF(1) has five subunits: alpha(3), beta(3), gamma(1), delta(1), epsilon(1). CF(0) has three main subunits: a, b and c.

Its subcellular location is the mitochondrion inner membrane. Its function is as follows. Mitochondrial membrane ATP synthase (F(1)F(0) ATP synthase or Complex V) produces ATP from ADP in the presence of a proton gradient across the membrane which is generated by electron transport complexes of the respiratory chain. F-type ATPases consist of two structural domains, F(1) - containing the extramembraneous catalytic core and F(0) - containing the membrane proton channel, linked together by a central stalk and a peripheral stalk. During catalysis, ATP synthesis in the catalytic domain of F(1) is coupled via a rotary mechanism of the central stalk subunits to proton translocation. Key component of the proton channel; it may play a direct role in the translocation of protons across the membrane. The polypeptide is ATP synthase subunit a (mt:ATPase6) (Drosophila yakuba (Fruit fly)).